Here is a 767-residue protein sequence, read N- to C-terminus: AMP deaminase 3 (767 aa).

Phosphoserine occurs at positions 85 and 107. Disordered regions lie at residues 89-111 (QMPPQQDWKGPPAASPAMSPTTP) and 181-205 (LGHPRADTAPPEEGLPDFHPPPLPQ). Positions 317 and 319 each coordinate Zn(2+). Substrate-binding positions include H319 and 388-393 (KFNSKY). Residue H586 coordinates Zn(2+). E589 is a binding site for substrate. Residue H608 is the Proton acceptor of the active site. Zn(2+) is bound at residue D663. 664–667 (DPMQ) is a binding site for substrate.

It belongs to the metallo-dependent hydrolases superfamily. Adenosine and AMP deaminases family. Homotetramer. Zn(2+) is required as a cofactor.

The catalysed reaction is AMP + H2O + H(+) = IMP + NH4(+). It participates in purine metabolism; IMP biosynthesis via salvage pathway; IMP from AMP: step 1/1. In terms of biological role, AMP deaminase plays a critical role in energy metabolism. This chain is AMP deaminase 3, found in Homo sapiens (Human).